The sequence spans 81 residues: MSHSVKIYDTCIGCTQCVRACPTDVLEMIPWDGCKAKQIASAPRTEDCVGCKRCESACPTDFLSVRVYLGAETTRSMGLAY.

2 4Fe-4S ferredoxin-type domains span residues 2 to 31 (SHSVKIYDTCIGCTQCVRACPTDVLEMIPW) and 39 to 68 (IASAPRTEDCVGCKRCESACPTDFLSVRVY). [4Fe-4S] cluster contacts are provided by C11, C14, C17, C21, C48, C51, C54, and C58.

In terms of assembly, the eukaryotic PSI reaction center is composed of at least 11 subunits. It depends on [4Fe-4S] cluster as a cofactor.

The protein resides in the plastid thylakoid membrane. It carries out the reaction reduced [plastocyanin] + hnu + oxidized [2Fe-2S]-[ferredoxin] = oxidized [plastocyanin] + reduced [2Fe-2S]-[ferredoxin]. Apoprotein for the two 4Fe-4S centers FA and FB of photosystem I (PSI); essential for photochemical activity. FB is the terminal electron acceptor of PSI, donating electrons to ferredoxin. The C-terminus interacts with PsaA/B/D and helps assemble the protein into the PSI complex. Required for binding of PsaD and PsaE to PSI. PSI is a plastocyanin-ferredoxin oxidoreductase, converting photonic excitation into a charge separation, which transfers an electron from the donor P700 chlorophyll pair to the spectroscopically characterized acceptors A0, A1, FX, FA and FB in turn. This Cuscuta gronovii (Common dodder) protein is Photosystem I iron-sulfur center.